A 444-amino-acid chain; its full sequence is tRNA-2-methylthio-N(6)-dimethylallyladenosine synthase (444 aa).

In terms of domain architecture, MTTase N-terminal spans 7-121; the sequence is KTFHVKSFGC…LPELIARAER (115 aa). [4Fe-4S] cluster-binding residues include Cys16, Cys52, Cys84, Cys158, Cys162, and Cys165. The Radical SAM core domain maps to 144 to 376; the sequence is GNQRPTAFLT…QALLNEQQQA (233 aa). The TRAM domain maps to 379 to 441; it reads EATVGRTTRL…PNSLGAEPLM (63 aa).

Belongs to the methylthiotransferase family. MiaB subfamily. Monomer. The cofactor is [4Fe-4S] cluster.

The protein localises to the cytoplasm. The enzyme catalyses N(6)-dimethylallyladenosine(37) in tRNA + (sulfur carrier)-SH + AH2 + 2 S-adenosyl-L-methionine = 2-methylsulfanyl-N(6)-dimethylallyladenosine(37) in tRNA + (sulfur carrier)-H + 5'-deoxyadenosine + L-methionine + A + S-adenosyl-L-homocysteine + 2 H(+). Functionally, catalyzes the methylthiolation of N6-(dimethylallyl)adenosine (i(6)A), leading to the formation of 2-methylthio-N6-(dimethylallyl)adenosine (ms(2)i(6)A) at position 37 in tRNAs that read codons beginning with uridine. This is tRNA-2-methylthio-N(6)-dimethylallyladenosine synthase from Sphingopyxis alaskensis (strain DSM 13593 / LMG 18877 / RB2256) (Sphingomonas alaskensis).